A 139-amino-acid chain; its full sequence is S-adenosyl-L-methionine-binding protein AF_0241 (139 aa).

The region spanning 3–133 (LKPIGVVKSP…YSPEIDCVNQ (131 aa)) is the TsaA-like domain. Residues Gln-16, 20–22 (PRQ), 58–59 (DK), Arg-82, Leu-92, and 113–116 (LDGS) contribute to the S-adenosyl-L-methionine site.

It belongs to the tRNA methyltransferase O family. As to quaternary structure, homodimer.

The chain is S-adenosyl-L-methionine-binding protein AF_0241 from Archaeoglobus fulgidus (strain ATCC 49558 / DSM 4304 / JCM 9628 / NBRC 100126 / VC-16).